Here is a 153-residue protein sequence, read N- to C-terminus: Sperm surface protein Sp17 (153 aa).

The disordered stretch occupies residues 74–117; that stretch reads FKVPSGATESKEAPPEKSEPEKETPQEVVKEQETQVSFVEEVST. Residues 82–106 are compositionally biased toward basic and acidic residues; sequence ESKEAPPEKSEPEKETPQEVVKEQE. In terms of domain architecture, IQ spans 122–151; sequence AAAAAVKIQAAFRGHKARKEVKIMKESSIE.

In terms of assembly, homodimer. May interact with ROPN1. In terms of tissue distribution, testis- and sperm-specific.

It localises to the membrane. In terms of biological role, sperm surface zona pellucida binding protein. Helps to bind spermatozoa to the zona pellucida with high affinity. Might function in binding zona pellucida and carbohydrates. In Notamacropus eugenii (Tammar wallaby), this protein is Sperm surface protein Sp17 (SPA17).